A 195-amino-acid chain; its full sequence is Imidazoleglycerol-phosphate dehydratase (195 aa).

It belongs to the imidazoleglycerol-phosphate dehydratase family.

Its subcellular location is the cytoplasm. It catalyses the reaction D-erythro-1-(imidazol-4-yl)glycerol 3-phosphate = 3-(imidazol-4-yl)-2-oxopropyl phosphate + H2O. The protein operates within amino-acid biosynthesis; L-histidine biosynthesis; L-histidine from 5-phospho-alpha-D-ribose 1-diphosphate: step 6/9. This chain is Imidazoleglycerol-phosphate dehydratase, found in Exiguobacterium sp. (strain ATCC BAA-1283 / AT1b).